Here is a 349-residue protein sequence, read N- to C-terminus: Phenylalanine--tRNA ligase alpha subunit (349 aa).

Glu258 contributes to the Mg(2+) binding site.

It belongs to the class-II aminoacyl-tRNA synthetase family. Phe-tRNA synthetase alpha subunit type 1 subfamily. In terms of assembly, tetramer of two alpha and two beta subunits. It depends on Mg(2+) as a cofactor.

Its subcellular location is the cytoplasm. It catalyses the reaction tRNA(Phe) + L-phenylalanine + ATP = L-phenylalanyl-tRNA(Phe) + AMP + diphosphate + H(+). In Rickettsia rickettsii (strain Sheila Smith), this protein is Phenylalanine--tRNA ligase alpha subunit.